Consider the following 417-residue polypeptide: UDP-N-acetylmuramoylalanine--D-glutamate ligase (417 aa).

101–107 serves as a coordination point for ATP; that stretch reads GTAGKTS.

Belongs to the MurCDEF family.

Its subcellular location is the cytoplasm. The enzyme catalyses UDP-N-acetyl-alpha-D-muramoyl-L-alanine + D-glutamate + ATP = UDP-N-acetyl-alpha-D-muramoyl-L-alanyl-D-glutamate + ADP + phosphate + H(+). The protein operates within cell wall biogenesis; peptidoglycan biosynthesis. Functionally, cell wall formation. Catalyzes the addition of glutamate to the nucleotide precursor UDP-N-acetylmuramoyl-L-alanine (UMA). This chain is UDP-N-acetylmuramoylalanine--D-glutamate ligase, found in Thermus thermophilus (strain ATCC BAA-163 / DSM 7039 / HB27).